A 367-amino-acid polypeptide reads, in one-letter code: MSSTLAKIAEIEAEMARTQKNKATAHHLGLLKARLAKLRRELITPKGGGGGGPGEGFDVAKTGDARIGFVGFPSVGKSTLLSNLAGVYSEVAAYEFTTLTTVPGVIRYKGAKIQLLDLPGIIEGAKDGKGRGRQVIAVARTCNLILIVLDVLKPLGHKKIIENELEGFGIRLNSKPPNIGFKKKDKGGINLTATCPQSELDAETVKSILAEYKIHNADVTLRSDATADDLIDVVEGNRVYIPCIYVLNKIDQISIEELDIIYKVPHCVPISAHHRWNFDDLLEKIWDYLKLVRIYTKPKGQLPDYTSPVVLPYSRTTVEDFCMKIHKNLIKEFKYALVWGLSVKHNPQKVGKDHTLEDEDVIQIVKK.

Ser2 bears the N-acetylserine mark. Residues 2–16 (SSTLAKIAEIEAEMA) are required for interaction with STK16. (3S)-3-hydroxylysine is present on Lys22. One can recognise an OBG-type G domain in the interval 65 to 290 (ARIGFVGFPS…LLEKIWDYLK (226 aa)). Residues 71–78 (GFPSVGKS), 96–100 (FTTLT), 117–120 (DLPG), 248–251 (NKID), and 271–273 (SAH) contribute to the GTP site. Residues Ser78 and Thr98 each contribute to the Mg(2+) site. Thr100 is subject to Phosphothreonine; by STK16. The TGS domain occupies 290 to 366 (KLVRIYTKPK…EDEDVIQIVK (77 aa)).

The protein belongs to the TRAFAC class OBG-HflX-like GTPase superfamily. OBG GTPase family. Interacts (via its C-terminal) with TAL1. Interacts with DFRP1/ZC3H15; this interaction prevents DRG1 poly-ubiquitination and degradation by proteasome. DRG1-ZC3H15/DFRP1 complex co-sediments with polysomes. Interacts with STK16. Interacts with JMJD7. Post-translationally, sumoylated by UBE2I in response to MEKK1-mediated stimuli. In terms of processing, hydroxylated (with S stereochemistry) at C-3 of Lys-22 by JMJD7. Phosphorylated at Thr-100 by STK16. Post-translationally, polyubiquitinated; this modification induces proteolytic degradation and is impaired by interaction with ZC3H15.

Its subcellular location is the nucleus. The protein resides in the cytoplasm. It catalyses the reaction GTP + H2O = GDP + phosphate + H(+). Its activity is regulated as follows. The GTPase activity is enhanced by potassium ions as well as by DFRP1 binding. In terms of biological role, catalyzes the conversion of GTP to GDP through hydrolysis of the gamma-phosphate bond in GTP. Appears to have an intrinsic GTPase activity that is stimulated by ZC3H15/DFRP1 binding likely by increasing the affinity for the potassium ions. When hydroxylated at C-3 of 'Lys-22' by JMJD7, may bind to RNA and play a role in translation. Binds to microtubules and promotes microtubule polymerization and bundling that are required for mitotic spindle assembly during prophase to anaphase transition. GTPase activity is not necessary for these microtubule-related functions. In Bos taurus (Bovine), this protein is Developmentally-regulated GTP-binding protein 1 (DRG1).